We begin with the raw amino-acid sequence, 703 residues long: MALSHPRPWASLLLVDLALLGLLQSSLGTLLPPGLPGLWLEGTLRLGVLWGLLKVGGLLRLVGTFLPLLCLTNPLFFSLRALVGSTMSTSVVRVASASWGWLLADYGAVALSLAVWAVLSPAGAQEKEPGQENNRALMIRLLRLSKPDLPFLIVAFIFLAMAVWWEMFIPHYSGRVIDILGGDFDPDAFASAIFFMCLFSVGSSLSAGCRGGSFLFAESRINLRIREQLFSSLLRQDLAFFQETKTGELNSRLSSDTSLMSQWLSLNANILLRSLVKVVGLYYFMLQVSPRLTFLSLLDLPLTIAAEKVYNPRHQAVLKEIQDAVAKAGQVVREAVGGLQTVRSFGAEEQEVRRYKEALERCRQLWWRRDLEKSLYLVIQRVMALGMQVLILNVGVQQILAGEVTRGGLLSFLLYQEEVGHHVQNLVYMYGDMLSNVGAAEKVFSYLDRRPNLPNPGTLAPPRLEGRVEFQDVSFSYPSRPEKPVLQGLTFTLHPGKVTALVGPNGSGKSTVAALLQNLYQPTGGQLLLDGEPLVQYDHHYLHRQVVLVGQEPVLFSGSVKDNIAYGLRDCEDAQVMAAAQAACADDFIGEMTNGINTEIGEKGSQLAVGQKQRLAIARALVRNPRVLILDEATSALDAECEQALQTWRSQEDRTMLVIAHRLHTVQNADQVLVLKQGQLVEHDQLRDEQDVYAHLVQQRLEA.

The Lumenal portion of the chain corresponds to 1 to 6 (MALSHP). The helical transmembrane segment at 7-27 (RPWASLLLVDLALLGLLQSSL) threads the bilayer. Residues 28-56 (GTLLPPGLPGLWLEGTLRLGVLWGLLKVG) are Cytoplasmic-facing. A helical membrane pass occupies residues 57–77 (GLLRLVGTFLPLLCLTNPLFF). Over 78-98 (SLRALVGSTMSTSVVRVASAS) the chain is Lumenal. The helical transmembrane segment at 99–119 (WGWLLADYGAVALSLAVWAVL) threads the bilayer. Residues 120–148 (SPAGAQEKEPGQENNRALMIRLLRLSKPD) are Cytoplasmic-facing. A helical membrane pass occupies residues 149 to 169 (LPFLIVAFIFLAMAVWWEMFI). An ABC transmembrane type-1 domain is found at 152–435 (LIVAFIFLAM…LVYMYGDMLS (284 aa)). At 170–187 (PHYSGRVIDILGGDFDPD) the chain is on the lumenal side. A helical membrane pass occupies residues 188–208 (AFASAIFFMCLFSVGSSLSAG). At 209–266 (CRGGSFLFAESRINLRIREQLFSSLLRQDLAFFQETKTGELNSRLSSDTSLMSQWLSL) the chain is on the cytoplasmic side. A helical transmembrane segment spans residues 267–287 (NANILLRSLVKVVGLYYFMLQ). Topologically, residues 288 to 293 (VSPRLT) are lumenal. Residues 294–314 (FLSLLDLPLTIAAEKVYNPRH) traverse the membrane as a helical segment. The tract at residues 301 to 389 (PLTIAAEKVY…QRVMALGMQV (89 aa)) is part of the peptide-binding site. Over 315 to 374 (QAVLKEIQDAVAKAGQVVREAVGGLQTVRSFGAEEQEVRRYKEALERCRQLWWRRDLEKS) the chain is Cytoplasmic. A helical membrane pass occupies residues 375-395 (LYLVIQRVMALGMQVLILNVG). Topologically, residues 396–408 (VQQILAGEVTRGG) are lumenal. A helical transmembrane segment spans residues 409–429 (LLSFLLYQEEVGHHVQNLVYM). The segment at 414-433 (LYQEEVGHHVQNLVYMYGDM) is part of the peptide-binding site. At 430-703 (YGDMLSNVGA…AHLVQQRLEA (274 aa)) the chain is on the cytoplasmic side. An ABC transporter domain is found at 468-702 (VEFQDVSFSY…YAHLVQQRLE (235 aa)). 503–510 (GPNGSGKS) contributes to the ATP binding site.

This sequence belongs to the ABC transporter superfamily. ABCB family. MHC peptide exporter (TC 3.A.1.209) subfamily. Heterodimer of TAP1 and TAP2 (TAP1-TAP2). A component of the peptide loading complex (PLC), interacts via TAPBP with MHCI heterodimer; this interaction mediates peptide-MHCI assembly. Mg(2+) is required as a cofactor.

The protein resides in the endoplasmic reticulum membrane. It carries out the reaction a peptide antigen(in) + ATP + H2O = a peptide antigen(out) + ADP + phosphate + H(+). Functionally, ABC transporter associated with antigen processing. In complex with TAP1 mediates unidirectional translocation of peptide antigens from cytosol to endoplasmic reticulum (ER) for loading onto MHC class I (MHCI) molecules. Uses the chemical energy of ATP to export peptides against the concentration gradient. During the transport cycle alternates between 'inward-facing' state with peptide binding site facing the cytosol to 'outward-facing' state with peptide binding site facing the ER lumen. Peptide antigen binding to ATP-loaded TAP1-TAP2 induces a switch to hydrolysis-competent 'outward-facing' conformation ready for peptide loading onto nascent MHCI molecules. Subsequently ATP hydrolysis resets the transporter to the 'inward facing' state for a new cycle. As a component of the peptide loading complex (PLC), acts as a molecular scaffold essential for peptide-MHCI assembly and antigen presentation. This is Antigen peptide transporter 2 (Tap2) from Rattus norvegicus (Rat).